The primary structure comprises 255 residues: NAD kinase (255 aa).

The Proton acceptor role is filled by Asp-44. Residues 44 to 45, His-49, 114 to 115, Asp-144, Ala-152, 155 to 160, and Gln-216 contribute to the NAD(+) site; these read DG, NE, and SAYNLS.

Belongs to the NAD kinase family. Requires a divalent metal cation as cofactor.

The protein localises to the cytoplasm. The enzyme catalyses NAD(+) + ATP = ADP + NADP(+) + H(+). Involved in the regulation of the intracellular balance of NAD and NADP, and is a key enzyme in the biosynthesis of NADP. Catalyzes specifically the phosphorylation on 2'-hydroxyl of the adenosine moiety of NAD to yield NADP. This chain is NAD kinase, found in Rickettsia akari (strain Hartford).